The chain runs to 34 residues: Leader peptide SpeFL (34 aa).

The short motif at 10–16 (HIRRTTH) is the Ornithine recognition loop element. Residue arginine 13 participates in L-ornithine binding.

This sequence belongs to the speF operon leader peptide family. As to quaternary structure, binds ornithine in stalled 70S ribosomes, blocking the upper two-thirds of the exit tunnel. Contacts 23S rRNA and ribosomal proteins L4 and L22.

Functionally, a small protein (arrest peptide) encoded upstream of inducible ornithine carboxylase gene (speF) that controls expression of downstream genes (speF and potE) by transcriptional and translational attenuation. Its expression controls transcription and translation of downstream SpeF; translation pausing at low Arg levels on this mRNA prevents premature Rho-dependent transcription termination of speF and also enhances SprF translation by preventing sequestration of its ribosome-binding site. In the presence of high Arg levels translation of this protein allows the formation of an speF mRNA structure that is degraded by RNase G. The polypeptide is Leader peptide SpeFL (Salmonella typhimurium (strain SL1344)).